Here is a 150-residue protein sequence, read N- to C-terminus: Peptide deformylase 1 (150 aa).

Fe cation is bound by residues Cys-88 and His-130. Residue Glu-131 is part of the active site. His-134 contacts Fe cation.

Belongs to the polypeptide deformylase family. It depends on Fe(2+) as a cofactor.

It carries out the reaction N-terminal N-formyl-L-methionyl-[peptide] + H2O = N-terminal L-methionyl-[peptide] + formate. Removes the formyl group from the N-terminal Met of newly synthesized proteins. Requires at least a dipeptide for an efficient rate of reaction. N-terminal L-methionine is a prerequisite for activity but the enzyme has broad specificity at other positions. This is Peptide deformylase 1 from Clostridium acetobutylicum (strain ATCC 824 / DSM 792 / JCM 1419 / IAM 19013 / LMG 5710 / NBRC 13948 / NRRL B-527 / VKM B-1787 / 2291 / W).